The chain runs to 398 residues: tRNA N6-adenosine threonylcarbamoyltransferase (398 aa).

His-162, His-166, and Tyr-183 together coordinate a divalent metal cation. Residues 183 to 187, Asp-215, Gly-230, Glu-234, and Asn-329 contribute to the substrate site; that span reads YVSGG. Asp-357 contacts a divalent metal cation.

Belongs to the KAE1 / TsaD family. Component of the EKC/KEOPS complex composed of at least BUD32, CGI121, GON7, KAE1 and PCC1; the whole complex dimerizes. A divalent metal cation serves as cofactor.

Its subcellular location is the cytoplasm. The protein localises to the nucleus. It catalyses the reaction L-threonylcarbamoyladenylate + adenosine(37) in tRNA = N(6)-L-threonylcarbamoyladenosine(37) in tRNA + AMP + H(+). Functionally, component of the EKC/KEOPS complex that is required for the formation of a threonylcarbamoyl group on adenosine at position 37 (t(6)A37) in tRNAs that read codons beginning with adenine. The complex is probably involved in the transfer of the threonylcarbamoyl moiety of threonylcarbamoyl-AMP (TC-AMP) to the N6 group of A37. KAE1 likely plays a direct catalytic role in this reaction, but requires other protein(s) of the complex to fulfill this activity. The EKC/KEOPS complex also promotes both telomere uncapping and telomere elongation. The complex is required for efficient recruitment of transcriptional coactivators. The polypeptide is tRNA N6-adenosine threonylcarbamoyltransferase (Cryptococcus neoformans var. neoformans serotype D (strain B-3501A) (Filobasidiella neoformans)).